Reading from the N-terminus, the 259-residue chain is (3R)-3-hydroxyacyl-CoA dehydrogenase (259 aa).

NAD(+) is bound by residues L13 to I21 and D40 to L41. Residue S58 is modified to Phosphoserine. Residue K66 is modified to N6-acetyllysine. A72–V74 provides a ligand contact to NAD(+). Residue S154 coordinates substrate. K158 is modified (N6-succinyllysine). The active-site Proton acceptor is Y167. NAD(+) contacts are provided by residues Y167–K171 and I200–T202. Position 171 is an N6-succinyllysine (K171).

The protein belongs to the short-chain dehydrogenases/reductases (SDR) family. As to quaternary structure, heterotetramer with CBR4; contains two molecules of HSD17B8 and CBR4. As to expression, expressed in ovary at protein level.

It is found in the mitochondrion matrix. It carries out the reaction a (3R)-3-hydroxyacyl-CoA + NAD(+) = a 3-oxoacyl-CoA + NADH + H(+). The enzyme catalyses 17beta-estradiol + NAD(+) = estrone + NADH + H(+). It catalyses the reaction testosterone + NAD(+) = androst-4-ene-3,17-dione + NADH + H(+). The catalysed reaction is 17beta-hydroxy-5alpha-androstan-3-one + NAD(+) = 5alpha-androstan-3,17-dione + NADH + H(+). It functions in the pathway steroid biosynthesis; estrogen biosynthesis. Its pathway is lipid metabolism; fatty acid biosynthesis. The protein operates within lipid metabolism; mitochondrial fatty acid beta-oxidation. In terms of biological role, required for the solubility and assembly of the heterotetramer 3-ketoacyl-[acyl carrier protein] (ACP) reductase functional complex (KAR or KAR1) that forms part of the mitochondrial fatty acid synthase (mtFAS). Alpha-subunit of the KAR complex that acts as scaffold protein required for the stability of carbonyl reductase type-4 (CBR4, beta-subunit of the KAR complex) and for its 3-ketoacyl-ACP reductase activity, thereby participating in mitochondrial fatty acid biosynthesis. Catalyzes the NAD-dependent conversion of (3R)-3-hydroxyacyl-CoA into 3-ketoacyl-CoA (3-oxoacyl-CoA) with no chain length preference; this enzymatic activity is not needed for the KAR function. Prefers (3R)-3-hydroxyacyl-CoA over (3S)-3-hydroxyacyl-CoA and displays enzymatic activity only in the presence of NAD(+). Cooperates with enoyl-CoA hydratase 1 in mitochondria, together they constitute an alternative route to the auxiliary enzyme pathways for the breakdown of Z-PUFA (cis polyunsaturated fatty acid) enoyl-esters. NAD-dependent 17-beta-hydroxysteroid dehydrogenase with highest activity towards estradiol (17beta-estradiol or E2). Has very low activity towards testosterone and dihydrotestosterone (17beta-hydroxy-5alpha-androstan-3-one). Primarily an oxidative enzyme, it can switch to a reductive mode determined in the appropriate physiologic milieu and catalyze the reduction of estrone (E1) to form biologically active 17beta-estradiol. The polypeptide is (3R)-3-hydroxyacyl-CoA dehydrogenase (Hsd17b8) (Rattus norvegicus (Rat)).